A 406-amino-acid polypeptide reads, in one-letter code: Argininosuccinate synthase (406 aa).

ATP-binding positions include 12–20 and Ala-39; that span reads AYSGGLDTS. 2 residues coordinate L-citrulline: Tyr-90 and Ser-95. Gly-120 serves as a coordination point for ATP. L-aspartate is bound by residues Thr-122, Asn-126, and Asp-127. Residue Asn-126 participates in L-citrulline binding. L-citrulline-binding residues include Arg-130, Ser-179, Ser-188, Glu-264, and Tyr-276.

It belongs to the argininosuccinate synthase family. Type 1 subfamily. As to quaternary structure, homotetramer.

Its subcellular location is the cytoplasm. The enzyme catalyses L-citrulline + L-aspartate + ATP = 2-(N(omega)-L-arginino)succinate + AMP + diphosphate + H(+). It functions in the pathway amino-acid biosynthesis; L-arginine biosynthesis; L-arginine from L-ornithine and carbamoyl phosphate: step 2/3. This Geotalea daltonii (strain DSM 22248 / JCM 15807 / FRC-32) (Geobacter daltonii) protein is Argininosuccinate synthase.